The primary structure comprises 664 residues: Intraflagellar transport protein 70B (664 aa).

TPR repeat units follow at residues 11-44 (DGEF…SSRS), 45-78 (RAGL…HPEL), 153-186 (YDGQ…SGYQ), 188-220 (DLSY…GIRQ), 385-418 (LTEQ…YDET), 423-456 (IPVL…CNDH), and 458-491 (VWKL…NYDN). The stretch at 507–534 (YIMTSQNEEAEELMRKIEKEEEQLSYGD) forms a coiled coil. The stretch at 543 to 576 (CIVNLVIGTLYCAKGNYDFGISRVIKSLEPYHKK) is one TPR 8 repeat.

Belongs to the TTC30/dfy-1/fleer family. In terms of assembly, interacts with the IFT B complex components IFT27, IFT46, IFT74, IFT52, IFT57, IFT80, IFT81 and IFT88. Interacts with KIF17.

The protein resides in the cell projection. It is found in the cilium. In terms of biological role, required for polyglutamylation of axonemal tubulin. Plays a role in anterograde intraflagellar transport (IFT), the process by which cilia precursors are transported from the base of the cilium to the site of their incorporation at the tip. This is Intraflagellar transport protein 70B (Ift70b) from Mus musculus (Mouse).